Reading from the N-terminus, the 179-residue chain is Protein GrpE (179 aa).

A disordered region spans residues 1-22; it reads MTDNNIENNEEEIRKAPSANDR. Basic and acidic residues predominate over residues 11–22; it reads EEIRKAPSANDR.

This sequence belongs to the GrpE family. In terms of assembly, homodimer.

The protein resides in the cytoplasm. In terms of biological role, participates actively in the response to hyperosmotic and heat shock by preventing the aggregation of stress-denatured proteins, in association with DnaK and GrpE. It is the nucleotide exchange factor for DnaK and may function as a thermosensor. Unfolded proteins bind initially to DnaJ; upon interaction with the DnaJ-bound protein, DnaK hydrolyzes its bound ATP, resulting in the formation of a stable complex. GrpE releases ADP from DnaK; ATP binding to DnaK triggers the release of the substrate protein, thus completing the reaction cycle. Several rounds of ATP-dependent interactions between DnaJ, DnaK and GrpE are required for fully efficient folding. This Rickettsia canadensis (strain McKiel) protein is Protein GrpE.